A 294-amino-acid polypeptide reads, in one-letter code: uncharacterized protein (294 aa).

3 disordered regions span residues 1-30 (MKRQ…EVSH), 51-86 (ALSD…KKRP), and 250-294 (DELN…STST). Polar residues-rich tracts occupy residues 7-26 (QDSM…TPTK), 66-81 (PYSS…NSST), and 255-277 (PMNN…NLPT).

The protein resides in the nucleus. This is an uncharacterized protein from Schizosaccharomyces pombe (strain 972 / ATCC 24843) (Fission yeast).